Reading from the N-terminus, the 415-residue chain is S-inosyl-L-homocysteine hydrolase (415 aa).

Substrate is bound by residues aspartate 123 and glutamate 148. 149–151 contacts NAD(+); the sequence is TTT. Residues lysine 178 and aspartate 182 each contribute to the substrate site. Residues asparagine 183, 212–217, glutamate 235, 291–293, and asparagine 337 each bind NAD(+); these read GYGWCG and AGH.

Belongs to the adenosylhomocysteinase family. It depends on NAD(+) as a cofactor.

It is found in the cytoplasm. The enzyme catalyses S-inosyl-L-homocysteine + H2O = L-homocysteine + inosine. Its pathway is amino-acid biosynthesis; S-adenosyl-L-methionine biosynthesis. Its function is as follows. Catalyzes the hydrolysis of S-inosyl-L-homocysteine (SIH) to L-homocysteine (Hcy) and inosine. Likely functions in a S-adenosyl-L-methionine (SAM) recycling pathway from S-adenosyl-L-homocysteine (SAH) produced from SAM-dependent methylation reactions. Can also catalyze the reverse reaction in vitro, i.e. the synthesis of SIH from Hcy and inosine. The chain is S-inosyl-L-homocysteine hydrolase from Methanococcus maripaludis (strain DSM 14266 / JCM 13030 / NBRC 101832 / S2 / LL).